We begin with the raw amino-acid sequence, 316 residues long: Peroxidase 31 (316 aa).

An N-terminal signal peptide occupies residues Met1–Ser19. Intrachain disulfides connect Cys30-Cys111, Cys63-Cys68, Cys117-Cys312, and Cys196-Cys222. The active-site Proton acceptor is His61. Ca(2+) contacts are provided by Asp62, Gly67, Asp69, and Ser71. Substrate is bound at residue Pro159. His189 is a heme b binding site. Ser190 is a binding site for Ca(2+). Residue Asn206 is glycosylated (N-linked (GlcNAc...) asparagine). Ca(2+) is bound by residues Asp236, Thr239, and Asp244.

This sequence belongs to the peroxidase family. Classical plant (class III) peroxidase subfamily. Requires heme b as cofactor. It depends on Ca(2+) as a cofactor.

The protein resides in the secreted. The enzyme catalyses 2 a phenolic donor + H2O2 = 2 a phenolic radical donor + 2 H2O. Functionally, removal of H(2)O(2), oxidation of toxic reductants, biosynthesis and degradation of lignin, suberization, auxin catabolism, response to environmental stresses such as wounding, pathogen attack and oxidative stress. These functions might be dependent on each isozyme/isoform in each plant tissue. This chain is Peroxidase 31 (PER31), found in Arabidopsis thaliana (Mouse-ear cress).